Reading from the N-terminus, the 663-residue chain is Probable serine/threonine-protein kinase DDB_G0283301 (663 aa).

Residues 312-586 (IERRNELGRG…EECVERLITL (275 aa)) form the Protein kinase domain. ATP contacts are provided by residues 318–326 (LGRGGNGTV) and lysine 348. Catalysis depends on aspartate 440, which acts as the Proton acceptor.

It belongs to the protein kinase superfamily. Ser/Thr protein kinase family.

The catalysed reaction is L-seryl-[protein] + ATP = O-phospho-L-seryl-[protein] + ADP + H(+). The enzyme catalyses L-threonyl-[protein] + ATP = O-phospho-L-threonyl-[protein] + ADP + H(+). This chain is Probable serine/threonine-protein kinase DDB_G0283301, found in Dictyostelium discoideum (Social amoeba).